Here is a 311-residue protein sequence, read N- to C-terminus: tRNA dimethylallyltransferase (311 aa).

Residue 13 to 20 participates in ATP binding; that stretch reads GPTASGKT. Position 15–20 (15–20) interacts with substrate; sequence TASGKT. 2 interaction with substrate tRNA regions span residues 38–41 and 166–170; these read DSMQ and QRVLR.

The protein belongs to the IPP transferase family. As to quaternary structure, monomer. The cofactor is Mg(2+).

It catalyses the reaction adenosine(37) in tRNA + dimethylallyl diphosphate = N(6)-dimethylallyladenosine(37) in tRNA + diphosphate. Catalyzes the transfer of a dimethylallyl group onto the adenine at position 37 in tRNAs that read codons beginning with uridine, leading to the formation of N6-(dimethylallyl)adenosine (i(6)A). In Staphylococcus aureus (strain Mu3 / ATCC 700698), this protein is tRNA dimethylallyltransferase.